A 284-amino-acid polypeptide reads, in one-letter code: Undecaprenyl-diphosphatase (284 aa).

The next 8 helical transmembrane spans lie at 1-21 (MNWLHAIILGIVEGITEFLPV), 43-63 (ITAFTAIIQVGAIIAAILYFW), 88-108 (YTLGWGIILGSIPVGVVGLVF), 116-136 (LSSLWVVAIALILWSGVMWLG), 149-169 (IGIVDAIVIGCFQALAPLFPG), 193-213 (LSFFMGIPALVAAGIYESVSA), 225-245 (VAIGWGPTILATVVSLIVAYV), and 259-279 (FTGFMWYRVVVGLIIIGLILS).

The protein belongs to the UppP family.

It localises to the cell membrane. It carries out the reaction di-trans,octa-cis-undecaprenyl diphosphate + H2O = di-trans,octa-cis-undecaprenyl phosphate + phosphate + H(+). Catalyzes the dephosphorylation of undecaprenyl diphosphate (UPP). Confers resistance to bacitracin. This Cutibacterium acnes (strain DSM 16379 / KPA171202) (Propionibacterium acnes) protein is Undecaprenyl-diphosphatase.